Here is a 74-residue protein sequence, read N- to C-terminus: MQMKYLIPIFFLVLIVADHCHAFIGMIPGLIGGLISAFKGRRKRDITAQIEQYRNIQKREAAELEELLANLPVY.

The N-terminal stretch at 1–22 (MQMKYLIPIFFLVLIVADHCHA) is a signal peptide. A Lysine amide modification is found at Lys39. The propeptide occupies 40 to 74 (GRRKRDITAQIEQYRNIQKREAAELEELLANLPVY).

This sequence belongs to the non-disulfide-bridged peptide (NDBP) superfamily. Short antimicrobial peptide (group 4) family. In terms of tissue distribution, expressed by the venom gland.

The protein localises to the secreted. In terms of biological role, antimicrobial peptide. Is able to kill Mycobacterium abscessus subsp. massiliense in a dose-dependent manner. Has antifungal activity against Candida spp. and one Cryptococcus neoformans strains with MICs values ranging from 12.5 to 200 uM. Also shows an inhibitory activity on C.albicans biofilms at high concentrations. Shows low cytotoxic activity and has weak hemolytic activity on human erythrocytes. Shows anti-inflammatory activities, since it decreases release of pro-inflammatory cytokines, and increases release of anti-inflammatory cytokines. Acts by blocking the Toll-like receptor 4 (TLR4). In addition, decreases the expression of costimulatory molecules such as CD80 and CD86 in LPS-stimulated cells. In vivo, does not induce immune cell migration. Helical wheel projections predict an amphipathic peptide with distinct hydrophobic and hydrophilic faces. The chain is Antimicrobial peptide ToAp1 from Tityus obscurus (Amazonian scorpion).